The chain runs to 300 residues: Putative hydro-lyase Dshi_3152 (300 aa).

Belongs to the D-glutamate cyclase family.

This is Putative hydro-lyase Dshi_3152 from Dinoroseobacter shibae (strain DSM 16493 / NCIMB 14021 / DFL 12).